Consider the following 250-residue polypeptide: 3-deoxy-manno-octulosonate cytidylyltransferase (250 aa).

The protein belongs to the KdsB family.

It localises to the cytoplasm. The enzyme catalyses 3-deoxy-alpha-D-manno-oct-2-ulosonate + CTP = CMP-3-deoxy-beta-D-manno-octulosonate + diphosphate. It participates in nucleotide-sugar biosynthesis; CMP-3-deoxy-D-manno-octulosonate biosynthesis; CMP-3-deoxy-D-manno-octulosonate from 3-deoxy-D-manno-octulosonate and CTP: step 1/1. Its pathway is bacterial outer membrane biogenesis; lipopolysaccharide biosynthesis. Activates KDO (a required 8-carbon sugar) for incorporation into bacterial lipopolysaccharide in Gram-negative bacteria. In Syntrophobacter fumaroxidans (strain DSM 10017 / MPOB), this protein is 3-deoxy-manno-octulosonate cytidylyltransferase.